A 411-amino-acid chain; its full sequence is UPF0761 membrane protein PLES_43641 (411 aa).

A run of 6 helical transmembrane segments spans residues 36 to 56 (LFAV…IPAF), 92 to 112 (HLTW…LVTI), 132 to 152 (FLLY…GFAV), 174 to 194 (LLGL…YSAV), 207 to 229 (GGVF…VSLF), and 244 to 264 (IFLL…VLVC).

Belongs to the UPF0761 family.

Its subcellular location is the cell inner membrane. This is UPF0761 membrane protein PLES_43641 from Pseudomonas aeruginosa (strain LESB58).